A 504-amino-acid polypeptide reads, in one-letter code: Potassium voltage-gated channel subfamily V member 1 (504 aa).

Disordered stretches follow at residues 1-22 (MDLS…GGSL) and 172-193 (KKDT…QGPC). The Cytoplasmic segment spans residues 1–214 (MDLSPRNRPL…EKPGSSTAAR (214 aa)). The span at 10 to 22 (LLESSSLDSGGSL) shows a compositional bias: low complexity. Basic and acidic residues predominate over residues 172–185 (KKDTDDQESQHESE). The helical transmembrane segment at 215–235 (IFGVISIIFVAVSIVNMALMS) threads the bilayer. Residues 236–242 (AELSWLN) lie on the Extracellular side of the membrane. The helical transmembrane segment at 243–263 (LQLLEILEYVCISWFTGEFIL) threads the bilayer. Residues 264-280 (RFLCVKDRCRFLRKVPN) lie on the Cytoplasmic side of the membrane. Residues 281-301 (IIDLLAILPFYITLLVESLSG) traverse the membrane as a helical segment. The Extracellular portion of the chain corresponds to 302 to 313 (SHTTQELENVGR). A helical; Voltage-sensor membrane pass occupies residues 314-335 (LVQVLRLLRALRMLKLGRHSTG). Topologically, residues 336-349 (LRSLGMTITQCYEE) are cytoplasmic. The helical transmembrane segment at 350 to 370 (VGLLLLFLSVGISIFSTIEYF) threads the bilayer. Residues 396–401 (TVGYGD) carry the Selectivity filter motif. The helical transmembrane segment at 411–431 (IVAFMCILSGILVLALPIAII) threads the bilayer. The Cytoplasmic portion of the chain corresponds to 432-504 (NDRFSACYFT…RSSGGDDFWF (73 aa)).

It belongs to the potassium channel family. V (TC 1.A.1.2) subfamily. Kv8.1/KCNV1 sub-subfamily. In terms of assembly, heteromultimer with KCNB1 and KCNB2. Interacts with KCNC4 and KCND1. In terms of tissue distribution, detected in brain, throughout layers II, IV and VI of the brain cortex. Detected in cerebellum and hippocampus, in the granule cell layer, Purkinje cell layer, pyramidal cell layer and dentate gyrus. Detected at lower levels in olfactory bulb, amygdala, thalamus, hypothalamus, midbrain and brainstem.

The protein localises to the cell membrane. Its function is as follows. Potassium channel subunit that does not form functional channels by itself. Modulates KCNB1 and KCNB2 channel activity by shifting the threshold for inactivation to more negative values and by slowing the rate of inactivation. Can down-regulate the channel activity of KCNB1, KCNB2, KCNC4 and KCND1, possibly by trapping them in intracellular membranes. This chain is Potassium voltage-gated channel subfamily V member 1 (KCNV1), found in Mesocricetus auratus (Golden hamster).